Reading from the N-terminus, the 388-residue chain is 3-dehydroquinate synthase (388 aa).

It belongs to the archaeal-type DHQ synthase family.

The enzyme catalyses 2-amino-2,3,7-trideoxy-D-lyxo-hept-6-ulosonate + NAD(+) + H2O = 3-dehydroquinate + NH4(+) + NADH + H(+). Functionally, catalyzes the oxidative deamination and cyclization of 2-amino-3,7-dideoxy-D-threo-hept-6-ulosonic acid (ADH) to yield 3-dehydroquinate (DHQ), which is fed into the canonical shikimic pathway of aromatic amino acid biosynthesis. The protein is 3-dehydroquinate synthase of Natronomonas pharaonis (strain ATCC 35678 / DSM 2160 / CIP 103997 / JCM 8858 / NBRC 14720 / NCIMB 2260 / Gabara) (Halobacterium pharaonis).